The following is a 73-amino-acid chain: MELFIPCPERLKKMMLKEELRKELLILRCLYHPTIQIMLPTLGTLGTEKRKEKYALSLFEPILNCVGSAKTSG.

N-glycosylated.

This is an uncharacterized protein from Saccharomyces cerevisiae (strain ATCC 204508 / S288c) (Baker's yeast).